The primary structure comprises 132 residues: Global transcriptional regulator Spx (132 aa).

Cys-10 and Cys-13 are disulfide-bonded.

This sequence belongs to the ArsC family. Spx subfamily. In terms of assembly, interacts with the C-terminal domain of the alpha subunit of the RNAP.

The protein localises to the cytoplasm. In terms of biological role, global transcriptional regulator that plays a key role in stress response and exerts either positive or negative regulation of genes. Acts by interacting with the C-terminal domain of the alpha subunit of the RNA polymerase (RNAP). This interaction can enhance binding of RNAP to the promoter region of target genes and stimulate their transcription, or block interaction of RNAP with activator. This chain is Global transcriptional regulator Spx, found in Enterococcus faecalis (strain ATCC 700802 / V583).